The sequence spans 602 residues: 4-hydroxy-3-methylbut-2-en-1-yl diphosphate synthase (flavodoxin) (602 aa).

Cys-508, Cys-511, Cys-543, and Glu-550 together coordinate [4Fe-4S] cluster.

Belongs to the IspG family. [4Fe-4S] cluster serves as cofactor.

It catalyses the reaction (2E)-4-hydroxy-3-methylbut-2-enyl diphosphate + oxidized [flavodoxin] + H2O + 2 H(+) = 2-C-methyl-D-erythritol 2,4-cyclic diphosphate + reduced [flavodoxin]. It functions in the pathway isoprenoid biosynthesis; isopentenyl diphosphate biosynthesis via DXP pathway; isopentenyl diphosphate from 1-deoxy-D-xylulose 5-phosphate: step 5/6. In terms of biological role, converts 2C-methyl-D-erythritol 2,4-cyclodiphosphate (ME-2,4cPP) into 1-hydroxy-2-methyl-2-(E)-butenyl 4-diphosphate. The chain is 4-hydroxy-3-methylbut-2-en-1-yl diphosphate synthase (flavodoxin) from Chlamydia trachomatis serovar D (strain ATCC VR-885 / DSM 19411 / UW-3/Cx).